The chain runs to 593 residues: Aspartate--tRNA(Asp/Asn) ligase (593 aa).

Glu182 serves as a coordination point for L-aspartate. An aspartate region spans residues 206–209; that stretch reads QLFK. Arg228 serves as a coordination point for L-aspartate. ATP-binding positions include 228–230 and Gln237; that span reads RDE. Position 455 (His455) interacts with L-aspartate. Glu489 is an ATP binding site. Arg496 serves as a coordination point for L-aspartate. Position 541–544 (541–544) interacts with ATP; it reads GLDR.

This sequence belongs to the class-II aminoacyl-tRNA synthetase family. Type 1 subfamily. In terms of assembly, homodimer.

The protein localises to the cytoplasm. The enzyme catalyses tRNA(Asx) + L-aspartate + ATP = L-aspartyl-tRNA(Asx) + AMP + diphosphate. Its function is as follows. Aspartyl-tRNA synthetase with relaxed tRNA specificity since it is able to aspartylate not only its cognate tRNA(Asp) but also tRNA(Asn). Reaction proceeds in two steps: L-aspartate is first activated by ATP to form Asp-AMP and then transferred to the acceptor end of tRNA(Asp/Asn). The protein is Aspartate--tRNA(Asp/Asn) ligase of Geotalea uraniireducens (strain Rf4) (Geobacter uraniireducens).